We begin with the raw amino-acid sequence, 197 residues long: Probable GTP-binding protein EngB (197 aa).

Residues 22 to 195 (QLPELALAGR…WRTILNHLKV (174 aa)) form the EngB-type G domain. Residues 30-37 (GRSNVGKS), 57-61 (GKTQT), 75-78 (DVPG), 142-145 (TKAD), and 174-176 (FSS) contribute to the GTP site. The Mg(2+) site is built by Ser-37 and Thr-59.

The protein belongs to the TRAFAC class TrmE-Era-EngA-EngB-Septin-like GTPase superfamily. EngB GTPase family. Requires Mg(2+) as cofactor.

In terms of biological role, necessary for normal cell division and for the maintenance of normal septation. The sequence is that of Probable GTP-binding protein EngB from Shouchella clausii (strain KSM-K16) (Alkalihalobacillus clausii).